The primary structure comprises 207 residues: MPLPDFRLIRLLPLASLVLTACTITSPKGPGKSPDSPQWRQHQQDVRNLNQYQTRGAFAYISDQQKVYARFFWQQTGQDRYRLLLTNPLGSTELELNAQPGNVQLVDNKGQRYTADDAEEMIGKLTGMPIPLNSLRQWILGLPGDATDYKLDDQYRLSEITYSQNGKNWKVVYGGYDTKTQPAMPANMELTEGGQRIKLKMDNWIVK.

The N-terminal stretch at M1 to A21 is a signal peptide. A lipid anchor (N-palmitoyl cysteine) is attached at C22. C22 carries the S-diacylglycerol cysteine lipid modification.

The protein belongs to the LolB family. As to quaternary structure, monomer.

The protein localises to the cell outer membrane. In terms of biological role, plays a critical role in the incorporation of lipoproteins in the outer membrane after they are released by the LolA protein. The protein is Outer-membrane lipoprotein LolB of Escherichia fergusonii (strain ATCC 35469 / DSM 13698 / CCUG 18766 / IAM 14443 / JCM 21226 / LMG 7866 / NBRC 102419 / NCTC 12128 / CDC 0568-73).